Reading from the N-terminus, the 256-residue chain is UPF0246 protein Swoo_1284 (256 aa).

It belongs to the UPF0246 family.

This chain is UPF0246 protein Swoo_1284, found in Shewanella woodyi (strain ATCC 51908 / MS32).